We begin with the raw amino-acid sequence, 31 residues long: Photosystem II reaction center protein T (31 aa).

Residues 3–23 (AIVYTFLLVGTLGIIFFAIFF) traverse the membrane as a helical segment.

This sequence belongs to the PsbT family. PSII is composed of 1 copy each of membrane proteins PsbA, PsbB, PsbC, PsbD, PsbE, PsbF, PsbH, PsbI, PsbJ, PsbK, PsbL, PsbM, PsbT, PsbY, PsbZ, Psb30/Ycf12, at least 3 peripheral proteins of the oxygen-evolving complex and a large number of cofactors. It forms dimeric complexes.

The protein resides in the plastid. The protein localises to the chloroplast thylakoid membrane. Found at the monomer-monomer interface of the photosystem II (PS II) dimer, plays a role in assembly and dimerization of PSII. PSII is a light-driven water plastoquinone oxidoreductase, using light energy to abstract electrons from H(2)O, generating a proton gradient subsequently used for ATP formation. This chain is Photosystem II reaction center protein T, found in Ostreococcus tauri.